The following is a 432-amino-acid chain: Enolase (432 aa).

Gln-167 is a (2R)-2-phosphoglycerate binding site. Glu-209 serves as the catalytic Proton donor. 3 residues coordinate Mg(2+): Asp-246, Glu-289, and Asp-316. (2R)-2-phosphoglycerate-binding residues include Lys-341, Arg-370, Ser-371, and Lys-392. The Proton acceptor role is filled by Lys-341.

Belongs to the enolase family. Mg(2+) is required as a cofactor.

The protein localises to the cytoplasm. Its subcellular location is the secreted. It localises to the cell surface. It carries out the reaction (2R)-2-phosphoglycerate = phosphoenolpyruvate + H2O. The protein operates within carbohydrate degradation; glycolysis; pyruvate from D-glyceraldehyde 3-phosphate: step 4/5. Its function is as follows. Catalyzes the reversible conversion of 2-phosphoglycerate (2-PG) into phosphoenolpyruvate (PEP). It is essential for the degradation of carbohydrates via glycolysis. This is Enolase from Petrotoga mobilis (strain DSM 10674 / SJ95).